A 567-amino-acid polypeptide reads, in one-letter code: Probable diguanylate cyclase DgcQ (567 aa).

Helical transmembrane passes span 20–40 (FGPGHVVNTCFLIVMLFSTLL) and 357–377 (IALTLLWGLFTAMLLISWGVI). One can recognise a GGDEF domain in the interval 425–560 (QPFSVIQLDL…GRNRICASDA (136 aa)). Asp433 provides a ligand contact to Mg(2+). Asn441, His446, and Asp450 together coordinate substrate. Glu476 is a binding site for Mg(2+). The active-site Proton acceptor is Glu476.

Homodimer. Mg(2+) serves as cofactor.

Its subcellular location is the cell inner membrane. It catalyses the reaction 2 GTP = 3',3'-c-di-GMP + 2 diphosphate. It functions in the pathway glycan metabolism; bacterial cellulose biosynthesis. It participates in purine metabolism; 3',5'-cyclic di-GMP biosynthesis. In terms of biological role, catalyzes the synthesis of cyclic-di-GMP (c-di-GMP) via the condensation of 2 GTP molecules. Cyclic-di-GMP is a second messenger which controls cell surface-associated traits in bacteria. Involved in the regulation of cellulose production. The sequence is that of Probable diguanylate cyclase DgcQ from Salmonella typhi.